The sequence spans 167 residues: Leptin (167 aa).

A signal peptide spans 1–21 (MRCGPLYQFLWLWPYLSYVEA). Cys117 and Cys167 are oxidised to a cystine.

This sequence belongs to the leptin family.

It localises to the secreted. In terms of biological role, key player in the regulation of energy balance and body weight control. Once released into the circulation, has central and peripheral effects by binding LEPR, found in many tissues, which results in the activation of several major signaling pathways. In the hypothalamus, acts as an appetite-regulating factor that induces a decrease in food intake and an increase in energy consumption by inducing anorexinogenic factors and suppressing orexigenic neuropeptides, also regulates bone mass and secretion of hypothalamo-pituitary-adrenal hormones. In the periphery, increases basal metabolism, influences reproductive function, regulates pancreatic beta-cell function and insulin secretion, is pro-angiogenic for endothelial cell and affects innate and adaptive immunity. In the arcuate nucleus of the hypothalamus, activates by depolarization POMC neurons inducing FOS and SOCS3 expression to release anorexigenic peptides and inhibits by hyperpolarization NPY neurons inducing SOCS3 with a consequent reduction on release of orexigenic peptides. In addition to its known satiety inducing effect, has a modulatory role in nutrient absorption. In the intestine, reduces glucose absorption by enterocytes by activating PKC and leading to a sequential activation of p38, PI3K and ERK signaling pathways which exerts an inhibitory effect on glucose absorption. Acts as a growth factor on certain tissues, through the activation of different signaling pathways increases expression of genes involved in cell cycle regulation such as CCND1, via JAK2-STAT3 pathway, or VEGFA, via MAPK1/3 and PI3K-AKT1 pathways. May also play an apoptotic role via JAK2-STAT3 pathway and up-regulation of BIRC5 expression. Pro-angiogenic, has mitogenic activity on vascular endothelial cells and plays a role in matrix remodeling by regulating the expression of matrix metalloproteinases (MMPs) and tissue inhibitors of metalloproteinases (TIMPs). In innate immunity, modulates the activity and function of neutrophils by increasing chemotaxis and the secretion of oxygen radicals. Increases phagocytosis by macrophages and enhances secretion of pro-inflammatory mediators. Increases cytotoxic ability of NK cells. Plays a pro-inflammatory role, in synergy with IL1B, by inducing NOS2 which promotes the production of IL6, IL8 and Prostaglandin E2, through a signaling pathway that involves JAK2, PI3K, MAP2K1/MEK1 and MAPK14/p38. In adaptive immunity, promotes the switch of memory T-cells towards T helper-1 cell immune responses. Increases CD4(+)CD25(-) T-cell proliferation and reduces autophagy during TCR (T-cell receptor) stimulation, through MTOR signaling pathway activation and BCL2 up-regulation. In Bubalus bubalis (Domestic water buffalo), this protein is Leptin (LEP).